The following is a 196-amino-acid chain: MKPQVVFVLGGPGAGKGTQCARIVEKYGYTHLSAGELLRDERKNPDSQYGELIEKYIKDGKIVPVEITISLLRREMDQTMAANAQKNKFLIDGFPRNQDNLQGWNKTMDGKADVSFVLFFDCNNEICIERCLERGKSSGRSDDNRESLEKRIQTYLQSTKPIIDLYEEMGKVRKIDASKSVDEVFDEVVKIFDKEG.

13–18 (GAGKGT) lines the ATP pocket. Ser33 carries the phosphoserine modification. Positions 33 to 63 (SAGELLRDERKNPDSQYGELIEKYIKDGKIV) are NMP. Arg39 serves as a coordination point for a ribonucleoside 5'-phosphate. Lys43 and Lys55 each carry N6-acetyllysine. A ribonucleoside 5'-phosphate is bound by residues 61-63 (KIV) and 93-96 (GFPR). A CMP-binding site is contributed by Asn100. Lys106 carries the N6-succinyllysine modification. The interval 133 to 143 (ERGKSSGRSDD) is LID. Residue Arg134 coordinates ATP. Residues Arg140 and Arg151 each coordinate a ribonucleoside 5'-phosphate. Lys179 contributes to the ATP binding site. Ser180 is subject to Phosphoserine.

The protein belongs to the adenylate kinase family. UMP-CMP kinase subfamily. In terms of assembly, monomer. Mg(2+) serves as cofactor.

It is found in the nucleus. It localises to the cytoplasm. The catalysed reaction is CMP + ATP = CDP + ADP. The enzyme catalyses dCMP + ATP = dCDP + ADP. It catalyses the reaction UMP + ATP = UDP + ADP. It carries out the reaction a 2'-deoxyribonucleoside 5'-diphosphate + ATP = a 2'-deoxyribonucleoside 5'-triphosphate + ADP. The catalysed reaction is a ribonucleoside 5'-diphosphate + ATP = a ribonucleoside 5'-triphosphate + ADP. In terms of biological role, catalyzes the phosphorylation of pyrimidine nucleoside monophosphates at the expense of ATP. Plays an important role in de novo pyrimidine nucleotide biosynthesis. Has preference for UMP and CMP as phosphate acceptors. Also displays broad nucleoside diphosphate kinase activity. This is UMP-CMP kinase from Bos taurus (Bovine).